A 587-amino-acid polypeptide reads, in one-letter code: Arginine--tRNA ligase (587 aa).

The short motif at 126-136 is the 'HIGH' region element; it reads ANPTGPLHVGH.

Belongs to the class-I aminoacyl-tRNA synthetase family. Monomer.

It localises to the cytoplasm. It catalyses the reaction tRNA(Arg) + L-arginine + ATP = L-arginyl-tRNA(Arg) + AMP + diphosphate. This Azoarcus sp. (strain BH72) protein is Arginine--tRNA ligase.